We begin with the raw amino-acid sequence, 304 residues long: uncharacterized protein (304 aa).

This is an uncharacterized protein from Acanthamoeba polyphaga (Amoeba).